The following is a 328-amino-acid chain: MYAIAEDTLPARVLKELLLYRRRYPEHRQSASEADEIRRIEQVQLPRIAAFIEAGEPIEFVLPAFPAKSPNPGKVLDSRPDMAERLSLSFLNHLCQRIQLFYAPGAKITVCSDGRVFGDLVRIGDAHISAYQDALRLMIEEIGATHIGVFNLEDVRAFEAQRDNHEQLRQLLIGGYAEPLESIRETLLASEEGLLLYRAITRFLYEDGLTPDYQGSKTALQRDAKERAYGVIQRSWAWGALLADQFPRAIRLSIHPQPADSLKFGIHMMPTRDDWLTPWHGVAVNTEDRFVLMKRSEVLELGGELVQINGQPSHYRLPARAARRAAVA.

Belongs to the isocyanide synthase family. In terms of assembly, monomer in solution.

It carries out the reaction D-ribulose 5-phosphate + L-tyrosine = (2S)-3-(4-hydroxyphenyl)-2-isocyanopropanoate + hydroxyacetone + formaldehyde + phosphate + H2O + H(+). In terms of biological role, involved in the biosynthesis of paerucumarin, a cyclized isocyano derivative of tyrosine. Responsible for the synthesis of the isonitrile group on tyrosine using the C2 of ribulose 5-phosphate as the source of the carbon atom. This Pseudomonas aeruginosa (strain ATCC 15692 / DSM 22644 / CIP 104116 / JCM 14847 / LMG 12228 / 1C / PRS 101 / PAO1) protein is L-tyrosine isonitrile synthase.